Consider the following 189-residue polypeptide: Cell division protein SepF (189 aa).

The segment at E25–E70 is disordered. Polar residues-rich tracts occupy residues R27–A41 and L54–E70.

This sequence belongs to the SepF family. As to quaternary structure, homodimer. Interacts with FtsZ.

It localises to the cytoplasm. Functionally, cell division protein that is part of the divisome complex and is recruited early to the Z-ring. Probably stimulates Z-ring formation, perhaps through the cross-linking of FtsZ protofilaments. Its function overlaps with FtsA. This Streptococcus gordonii (strain Challis / ATCC 35105 / BCRC 15272 / CH1 / DL1 / V288) protein is Cell division protein SepF.